Reading from the N-terminus, the 78-residue chain is Conotoxin Bu2 (78 aa).

The first 19 residues, 1 to 19 (MKLTCVLIIAVLFLTAITA), serve as a signal peptide directing secretion. The propeptide occupies 20-41 (DDSRDKQVYRAVGLIDKMRRIR). 3 disulfides stabilise this stretch: Cys-46/Cys-59, Cys-53/Cys-64, and Cys-58/Cys-73.

The protein belongs to the conotoxin O1 superfamily. Expressed by the venom duct.

It localises to the secreted. In Conus bullatus (Bubble cone), this protein is Conotoxin Bu2.